Consider the following 335-residue polypeptide: Phosphate acyltransferase (335 aa).

Belongs to the PlsX family. As to quaternary structure, homodimer. Probably interacts with PlsY.

The protein localises to the cytoplasm. It carries out the reaction a fatty acyl-[ACP] + phosphate = an acyl phosphate + holo-[ACP]. It participates in lipid metabolism; phospholipid metabolism. Its function is as follows. Catalyzes the reversible formation of acyl-phosphate (acyl-PO(4)) from acyl-[acyl-carrier-protein] (acyl-ACP). This enzyme utilizes acyl-ACP as fatty acyl donor, but not acyl-CoA. The chain is Phosphate acyltransferase from Leptospira interrogans serogroup Icterohaemorrhagiae serovar copenhageni (strain Fiocruz L1-130).